The following is a 500-amino-acid chain: MSDTPFGDADHPRPAPIHPDAVLPPPMSSQSADNDPTEALNEAWTNILTKVSKPNRAWLSNTTPVTMHSSTAMVAVPNEFARDRLESKMRYELEELLSDHFHKAIHLAITIDPDLELALGAPDHEDEEEEVPPAQFVPKVTVGVTEPSARPTTTIDDDEGNRLNPKYTFDSFVIGASNRFAHAAAVAVAEAPGKSYNPLLIYGGSGLGKTHLLHAIGRYVMSYYDNVKVKYVSTEELTNDFINAIGTNRTTEFRRSYRDVDVLLVDDIQFLQSKIQTQEEFFHTFNTLHNAQKQIVMTSDRPPKLLEALEPRLRSRFEWGLLTDIQPPDLETRIAILRRKVAAEKITVEPDVLEFIASRIQTNIRELEGALIRVTAFASLNQQPVDISLAEVVLKDLIPEGRETPVTPERIIAETADYFDISADDLLGTSRAQTLVTARQIAMYLCRELTDLSLPKIGAEFGGKDHTTVMHADRKIRALMGEQRQIFNQVSEITNRIKQY.

The tract at residues 1–37 is disordered; sequence MSDTPFGDADHPRPAPIHPDAVLPPPMSSQSADNDPT. A domain I, interacts with DnaA modulators region spans residues 1 to 103; that stretch reads MSDTPFGDAD…EELLSDHFHK (103 aa). Residues 14 to 27 are compositionally biased toward pro residues; the sequence is PAPIHPDAVLPPPM. A domain II region spans residues 103-161; the sequence is KAIHLAITIDPDLELALGAPDHEDEEEEVPPAQFVPKVTVGVTEPSARPTTTIDDDEGN. Positions 162-378 are domain III, AAA+ region; that stretch reads RLNPKYTFDS…GALIRVTAFA (217 aa). Residues Gly206, Gly208, Lys209, and Thr210 each contribute to the ATP site. The segment at 379 to 500 is domain IV, binds dsDNA; it reads SLNQQPVDIS…SEITNRIKQY (122 aa).

This sequence belongs to the DnaA family. As to quaternary structure, oligomerizes as a right-handed, spiral filament on DNA at oriC.

It localises to the cytoplasm. Its function is as follows. Plays an essential role in the initiation and regulation of chromosomal replication. ATP-DnaA binds to the origin of replication (oriC) to initiate formation of the DNA replication initiation complex once per cell cycle. Binds the DnaA box (a 9 base pair repeat at the origin) and separates the double-stranded (ds)DNA. Forms a right-handed helical filament on oriC DNA; dsDNA binds to the exterior of the filament while single-stranded (ss)DNA is stabiized in the filament's interior. The ATP-DnaA-oriC complex binds and stabilizes one strand of the AT-rich DNA unwinding element (DUE), permitting loading of DNA polymerase. After initiation quickly degrades to an ADP-DnaA complex that is not apt for DNA replication. Binds acidic phospholipids. This Cutibacterium acnes (strain DSM 16379 / KPA171202) (Propionibacterium acnes) protein is Chromosomal replication initiator protein DnaA.